The chain runs to 251 residues: 4-hydroxy-tetrahydrodipicolinate reductase (251 aa).

8–13 contacts NAD(+); it reads GALGRM. Residue arginine 36 coordinates NADP(+). Residues 89 to 91 and 113 to 116 each bind NAD(+); these read GTT and TTNF. Histidine 145 (proton donor/acceptor) is an active-site residue. Residue histidine 146 coordinates (S)-2,3,4,5-tetrahydrodipicolinate. Lysine 149 (proton donor) is an active-site residue. A (S)-2,3,4,5-tetrahydrodipicolinate-binding site is contributed by 155-156; that stretch reads GT.

The protein belongs to the DapB family.

It localises to the cytoplasm. The catalysed reaction is (S)-2,3,4,5-tetrahydrodipicolinate + NAD(+) + H2O = (2S,4S)-4-hydroxy-2,3,4,5-tetrahydrodipicolinate + NADH + H(+). The enzyme catalyses (S)-2,3,4,5-tetrahydrodipicolinate + NADP(+) + H2O = (2S,4S)-4-hydroxy-2,3,4,5-tetrahydrodipicolinate + NADPH + H(+). It functions in the pathway amino-acid biosynthesis; L-lysine biosynthesis via DAP pathway; (S)-tetrahydrodipicolinate from L-aspartate: step 4/4. In terms of biological role, catalyzes the conversion of 4-hydroxy-tetrahydrodipicolinate (HTPA) to tetrahydrodipicolinate. The protein is 4-hydroxy-tetrahydrodipicolinate reductase of Methanocorpusculum labreanum (strain ATCC 43576 / DSM 4855 / Z).